The chain runs to 242 residues: uncharacterized protein (242 aa).

Disordered stretches follow at residues 16–121 (GLYK…GAMA) and 152–178 (PVRP…TQPV). 2 stretches are compositionally biased toward pro residues: residues 50 to 64 (PRPP…PSPA) and 97 to 113 (EPRP…PPGP). A compositionally biased stretch (basic residues) spans 157 to 172 (KLPKGKGRLRRPRQSR). T175 carries the post-translational modification Phosphothreonine. Phosphoserine is present on residues S192, S206, S216, S232, and S238. The segment at 215-242 (QSLSLQREPLGSCKLRNSLDSSDSDSAL) is disordered. The span at 232–242 (SLDSSDSDSAL) shows a compositional bias: low complexity.

It is found in the cytoplasm. This is an uncharacterized protein from Rattus norvegicus (Rat).